Reading from the N-terminus, the 673-residue chain is MASSISEQINHLRSTLEQHSYNYYVLDTPSIPDAEYDRLLQQLSALETQHPELITADSPTQKVGGAALSKFEQVAHQVPMLSLDNAFSEDEFIAFNRRIKERLMSTEELTFCCEPKLDGLAVSIIYRDGVLVQAATRGDGLTGENVTQNVKTIRNVPLKLRGSDYPAELEVRGEVFMDNAGFEKFNIEAEKRGEKVFVNPRNAAAGSLRQLDSKITAKRPLMFYAYSTGLVADGSIAEDHYQQLEKLTDWGLPLCPETKLVEGPQAALAYYTDILTRRGELKYEIDGVVIKINQKALQERLGFVARAPRWAIAYKFPAQEEITKLLDVEFQVGRTGAITPVARLEPVFVGGVTVSNATLHNGDEIARLGVKVGDTVIIRRAGDVIPQITQVVLERRPDDARDIEFPVTCPICDSHVEKVEGEAVARCTGGLVCPAQRKQAIKHFASRKALDIDGLGDKIVDQLVDRELIKTPADLFILKQGHFESLERMGPKSAKNLVTALQDAKATTLAKFLYSLGIREAGEATTQNLANHFLTLENVINASIDSLTQVSDVGEIVATHVRSFFAEQHNLDVVNALVEQGINWPELTPPSAQEQPLAGLVYVLTGTLNTLNRNDAKARLQQLGAKVSGSVSAKTDALVAGEKAGSKLTKAQDLGIDVLTEEDLINLLEQHNG.

Residues 33–37, 82–83, and glutamate 114 each bind NAD(+); these read DAEYD and SL. The active-site N6-AMP-lysine intermediate is the lysine 116. Residues arginine 137, glutamate 174, lysine 291, and lysine 315 each contribute to the NAD(+) site. Zn(2+) is bound by residues cysteine 409, cysteine 412, cysteine 427, and cysteine 433. Residues 592–673 enclose the BRCT domain; the sequence is AQEQPLAGLV…LINLLEQHNG (82 aa).

Belongs to the NAD-dependent DNA ligase family. LigA subfamily. Requires Mg(2+) as cofactor. Mn(2+) is required as a cofactor.

It catalyses the reaction NAD(+) + (deoxyribonucleotide)n-3'-hydroxyl + 5'-phospho-(deoxyribonucleotide)m = (deoxyribonucleotide)n+m + AMP + beta-nicotinamide D-nucleotide.. DNA ligase that catalyzes the formation of phosphodiester linkages between 5'-phosphoryl and 3'-hydroxyl groups in double-stranded DNA using NAD as a coenzyme and as the energy source for the reaction. It is essential for DNA replication and repair of damaged DNA. In Pseudoalteromonas translucida (strain TAC 125), this protein is DNA ligase.